We begin with the raw amino-acid sequence, 402 residues long: Acetylornithine aminotransferase (402 aa).

Pyridoxal 5'-phosphate contacts are provided by residues 117–118 and Phe-143; that span reads GA. Arg-146 serves as a coordination point for N(2)-acetyl-L-ornithine. 231-234 is a binding site for pyridoxal 5'-phosphate; it reads DEVQ. Lys-260 is modified (N6-(pyridoxal phosphate)lysine). Residue Thr-288 participates in N(2)-acetyl-L-ornithine binding. Thr-289 lines the pyridoxal 5'-phosphate pocket.

It belongs to the class-III pyridoxal-phosphate-dependent aminotransferase family. ArgD subfamily. Homodimer. The cofactor is pyridoxal 5'-phosphate.

It localises to the cytoplasm. The enzyme catalyses N(2)-acetyl-L-ornithine + 2-oxoglutarate = N-acetyl-L-glutamate 5-semialdehyde + L-glutamate. It participates in amino-acid biosynthesis; L-arginine biosynthesis; N(2)-acetyl-L-ornithine from L-glutamate: step 4/4. The protein is Acetylornithine aminotransferase of Corynebacterium efficiens (strain DSM 44549 / YS-314 / AJ 12310 / JCM 11189 / NBRC 100395).